Consider the following 396-residue polypeptide: MSHAIDELQAIIAELKVELEEQKTSNRQARSRIDRMSAEVVDSNPYSRLMALQRMNIVKEYERIRDKAVAVVGVGGVGSVTADMLTRCGIGKLILFDYDKVELANMNRLFFTPDQAGLSKVEAAARTLNFINPDVQIETHNYNITTVDNFDRFLATITESGKELGQPVDLVLSCVDNFEARMAINAACNERNLNWFESGVSENAVSGHIQFIRPGDTACFACAPPLVVAENIDEKTLKREGVCAASLPTTMGITAGFLVQNALKYLLNFGEVSDYLGYNALNDFFPRMTLKPNPQCDDRNCLLRQKEFQARPKPIEVKEDVSSSDEPLHATNEWGIELVADDEPVNCPEPAKSSAVVQGLKLAYEAPEKEKVEEENVATVSDETSLEDLMAQMKSM.

The ATP site is built by Gly76, Asp97, Lys120, Asn143, and Asn177. Zn(2+) contacts are provided by Cys219 and Cys222. Catalysis depends on Cys243, which acts as the Glycyl thioester intermediate. Zn(2+) contacts are provided by Cys296 and Cys301.

It belongs to the ubiquitin-activating E1 family. UBA5 subfamily.

In terms of biological role, E1-like enzyme which activates UFM1. The protein is Ubiquitin-like modifier-activating enzyme 5 of Drosophila ananassae (Fruit fly).